A 141-amino-acid polypeptide reads, in one-letter code: Hemoglobin subunit alpha (141 aa).

In terms of domain architecture, Globin spans 1-141 (VLSPADKTNV…VSTVLTSKYR (141 aa)). S3 is modified (phosphoserine). K7 is modified (N6-succinyllysine). Phosphothreonine is present on T8. The residue at position 11 (K11) is an N6-succinyllysine. N6-acetyllysine; alternate is present on K16. K16 is modified (N6-succinyllysine; alternate). Residue Y24 is modified to Phosphotyrosine. A Phosphoserine modification is found at S35. The residue at position 40 (K40) is an N6-succinyllysine. The residue at position 49 (S49) is a Phosphoserine. H58 is an O2 binding site. Residue H87 participates in heme b binding. At S102 the chain carries Phosphoserine. At T108 the chain carries Phosphothreonine. Phosphoserine occurs at positions 124 and 131. Phosphothreonine occurs at positions 134 and 137. Residue S138 is modified to Phosphoserine.

The protein belongs to the globin family. Heterotetramer of two alpha chains and two beta chains. Red blood cells.

In terms of biological role, involved in oxygen transport from the lung to the various peripheral tissues. Its function is as follows. Hemopressin acts as an antagonist peptide of the cannabinoid receptor CNR1. Hemopressin-binding efficiently blocks cannabinoid receptor CNR1 and subsequent signaling. The protein is Hemoglobin subunit alpha (HBA) of Semnopithecus entellus (Northern plains gray langur).